Reading from the N-terminus, the 338-residue chain is Probable tRNA pseudouridine synthase B (338 aa).

Residue Asp-78 is the Nucleophile of the active site. The PUA domain maps to 245–320 (LPKIILRDSA…IAASPIRVLM (76 aa)).

It belongs to the pseudouridine synthase TruB family. Type 2 subfamily.

It catalyses the reaction uridine(55) in tRNA = pseudouridine(55) in tRNA. In terms of biological role, could be responsible for synthesis of pseudouridine from uracil-55 in the psi GC loop of transfer RNAs. This is Probable tRNA pseudouridine synthase B from Methanosarcina mazei (strain ATCC BAA-159 / DSM 3647 / Goe1 / Go1 / JCM 11833 / OCM 88) (Methanosarcina frisia).